A 56-amino-acid chain; its full sequence is uncharacterized protein (56 aa).

This is an uncharacterized protein from Bacillus subtilis (strain 168).